A 390-amino-acid chain; its full sequence is Protein phosphatase methylesterase 1 (390 aa).

Positions 19–50 are disordered; it reads FGLSSLSEDPDESESNSNYFSPTPQPPNELRT. The AB hydrolase-1 domain maps to 100 to 332; it reads PIFICHHGAG…NLIIGQMQGK (233 aa). Residues S186, D213, and H346 contribute to the active site.

It belongs to the AB hydrolase superfamily.

It carries out the reaction [phosphatase 2A protein]-C-terminal L-leucine methyl ester + H2O = [phosphatase 2A protein]-C-terminal L-leucine + methanol + H(+). Demethylates proteins that have been reversibly carboxymethylated. Demethylates the phosphatase PP2A catalytic subunit. The protein is Protein phosphatase methylesterase 1 (PPE1) of Debaryomyces hansenii (strain ATCC 36239 / CBS 767 / BCRC 21394 / JCM 1990 / NBRC 0083 / IGC 2968) (Yeast).